Here is a 552-residue protein sequence, read N- to C-terminus: Glutamine--tRNA ligase (552 aa).

The 'HIGH' region motif lies at 34 to 44; that stretch reads PEPNGYLHIGH. Residues 35–37 and 41–47 contribute to the ATP site; these read EPN and HIGHAKS. L-glutamine-binding residues include Asp67 and Tyr212. ATP is bound by residues Thr231, 261 to 262, and 269 to 271; these read RL and MSK. Positions 268–272 match the 'KMSKS' region motif; that stretch reads LMSKR.

It belongs to the class-I aminoacyl-tRNA synthetase family. Monomer.

It is found in the cytoplasm. The enzyme catalyses tRNA(Gln) + L-glutamine + ATP = L-glutaminyl-tRNA(Gln) + AMP + diphosphate. The sequence is that of Glutamine--tRNA ligase from Hamiltonella defensa subsp. Acyrthosiphon pisum (strain 5AT).